The primary structure comprises 304 residues: Homoserine kinase (304 aa).

90 to 100 provides a ligand contact to ATP; the sequence is PLARGLGSSAS.

Belongs to the GHMP kinase family. Homoserine kinase subfamily.

It localises to the cytoplasm. It catalyses the reaction L-homoserine + ATP = O-phospho-L-homoserine + ADP + H(+). Its pathway is amino-acid biosynthesis; L-threonine biosynthesis; L-threonine from L-aspartate: step 4/5. Its function is as follows. Catalyzes the ATP-dependent phosphorylation of L-homoserine to L-homoserine phosphate. The polypeptide is Homoserine kinase (Staphylococcus aureus (strain MSSA476)).